A 148-amino-acid chain; its full sequence is Calmodulin-related protein 97A (148 aa).

4 consecutive EF-hand domains span residues 7–42 (EQIA…LGQN), 43–78 (PTEA…QMRE), 80–115 (DTEE…LGEK), and 116–148 (VTDE…ISQK). Ca(2+) is bound by residues Asp20, Thr24, Lys26, Glu31, Asn58, Asn60, Gln62, Glu67, Asp93, Asp95, Asp97, Glu104, Asp129, Asp131, Asp133, Met135, and Glu140.

Belongs to the calmodulin family.

In terms of biological role, may be involved in calcium-mediated signal transduction. The polypeptide is Calmodulin-related protein 97A (Acam) (Drosophila melanogaster (Fruit fly)).